Here is a 201-residue protein sequence, read N- to C-terminus: Lipopolysaccharide core heptose(II)-phosphate phosphatase (201 aa).

The N-terminal stretch at 1 to 35 (MLAFTLRFIKNKRYLATLAGALVIIAGLTSQHAWS) is a signal peptide.

The protein belongs to the phosphoglycerate mutase family. Ais subfamily.

Its subcellular location is the periplasm. It participates in bacterial outer membrane biogenesis; lipopolysaccharide metabolism. Its function is as follows. Catalyzes the dephosphorylation of heptose(II) of the outer membrane lipopolysaccharide core. The sequence is that of Lipopolysaccharide core heptose(II)-phosphate phosphatase from Salmonella paratyphi A (strain AKU_12601).